Consider the following 202-residue polypeptide: MTYELPKLPYTYDALEPNFDKETMEIHYTKHHNIYVTKLNEAVSGHAELASKPGEELVANLDSVPEEIRGAVRNHGGGHANHTLFWSSLSPNGGGAPTGNLKAAIESEFGTFDEFKEKFNAAAAARFGSGWAWLVVNNGKLEIVSTANQDSPLSEGKTPVLGLDVWEHAYYLKFQNRRPEYIDTFWNVINWDERNKRFDAAK.

Residues His-27, His-82, Asp-164, and His-168 each coordinate Mn(2+).

It belongs to the iron/manganese superoxide dismutase family. As to quaternary structure, homodimer. Requires Mn(2+) as cofactor.

The enzyme catalyses 2 superoxide + 2 H(+) = H2O2 + O2. Functionally, destroys superoxide anion radicals which are normally produced within the cells and which are toxic to biological systems. The chain is Superoxide dismutase [Mn] (sodA) from Listeria ivanovii.